The chain runs to 122 residues: Large ribosomal subunit protein uL14 (122 aa).

This sequence belongs to the universal ribosomal protein uL14 family. Part of the 50S ribosomal subunit. Forms a cluster with proteins L3 and L19. In the 70S ribosome, L14 and L19 interact and together make contacts with the 16S rRNA in bridges B5 and B8.

Functionally, binds to 23S rRNA. Forms part of two intersubunit bridges in the 70S ribosome. This chain is Large ribosomal subunit protein uL14, found in Stutzerimonas stutzeri (strain A1501) (Pseudomonas stutzeri).